A 302-amino-acid chain; its full sequence is Paired immunoglobulin-like type 2 receptor alpha (302 aa).

Residues 1-31 form the signal peptide; sequence MALLISLPGGTPAMAQILLLLSSACLHAGNS. Residues 32–198 are Extracellular-facing; the sequence is ERSNRKNGFG…GGLDLQTTVG (167 aa). N-linked (GlcNAc...) asparagine glycosylation is found at Asn90 and Asn107. The chain crosses the membrane as a helical span at residues 199 to 219; it reads LATAAAVFLVGVLGLIVFLWW. Residues 220–302 are Cytoplasmic-facing; that stretch reads KRRRQGQKTK…ETVYSIVKAK (83 aa). Residues 228 to 248 are compositionally biased toward basic and acidic residues; sequence TKAEIPAREPLETSEKHESVG. Residues 228–293 are disordered; the sequence is TKAEIPAREP…LPVHGNPQEE (66 aa). Short sequence motifs (ITIM motif) lie at residues 265–270 and 294–299; these read IVYASI and TVYSIV. A compositionally biased stretch (polar residues) spans 270-280; that stretch reads ISLSSPTSPGT.

As to quaternary structure, interacts with CD99. Phosphorylated on tyrosine residues.

The protein resides in the membrane. In terms of biological role, paired receptors consist of highly related activating and inhibitory receptors and are widely involved in the regulation of the immune system. Receptor for CD99 and PIANP. This chain is Paired immunoglobulin-like type 2 receptor alpha (Pilra), found in Mus musculus (Mouse).